The primary structure comprises 106 residues: Secreted RxLR effector protein 18 (106 aa).

The N-terminal stretch at 1 to 17 (MRGSTAMLLAAIALFSS) is a signal peptide. A RxLR-dEER motif is present at residues 28-39 (RTLRSFEELEER).

It belongs to the RxLR effector family.

Its subcellular location is the secreted. It is found in the host cell. In terms of biological role, effector that may act as a suppressor of cell death to interrupt plant immunity. I. This is Secreted RxLR effector protein 18 from Plasmopara viticola (Downy mildew of grapevine).